The primary structure comprises 206 residues: Adenylate kinase (206 aa).

Residues M1–S21 form a disordered region. G13–T18 is a binding site for ATP. The tract at residues T33 to V61 is NMP. Residues T34, R39, E59 to V61, G84 to R87, and Q91 contribute to the AMP site. An LID region spans residues G120–D153. Residues R121 and I130–Y131 contribute to the ATP site. AMP contacts are provided by R150 and R161. A189 provides a ligand contact to ATP.

The protein belongs to the adenylate kinase family. Monomer.

The protein localises to the cytoplasm. It carries out the reaction AMP + ATP = 2 ADP. The protein operates within purine metabolism; AMP biosynthesis via salvage pathway; AMP from ADP: step 1/1. Catalyzes the reversible transfer of the terminal phosphate group between ATP and AMP. Plays an important role in cellular energy homeostasis and in adenine nucleotide metabolism. The protein is Adenylate kinase of Natronomonas pharaonis (strain ATCC 35678 / DSM 2160 / CIP 103997 / JCM 8858 / NBRC 14720 / NCIMB 2260 / Gabara) (Halobacterium pharaonis).